A 338-amino-acid chain; its full sequence is Homeobox protein ceh-20 (338 aa).

The PBC domain maps to 4–187 (THPANLSELL…VMILRSRFLD (184 aa)). The PBC-A stretch occupies residues 11–91 (ELLDAVLKIN…EGVAGPDKGG (81 aa)). Residues 94–187 (GSDASGGDQA…VMILRSRFLD (94 aa)) are PBC-B. A DNA-binding region (homeobox; TALE-type) is located at residues 188–250 (ARRKRRNFSK…NKRIRYKKNM (63 aa)).

The protein belongs to the TALE/PBX homeobox family. In terms of assembly, interacts with Meis protein psa-3. Interacts with homeobox protein nob-1. In terms of tissue distribution, expressed in head dopaminergic neurons.

The protein resides in the nucleus. In terms of biological role, transcription factor that binds to the 5'-TGATNNAT(G/T)(G/A)-3' PBC/Hox lineage enhancer region of sem-2 to promote cell fate specification in the postembryonic mesoderm (also known as the M lineage). Required for the M lineage-specific expression of the transcription factor, mls-2. Required for asymmetric division of the T hypodermal cell, probably acting via the regulation of asymmetric expression of Meis protein psa-3 in concert with homeobox protein nob-1 and the Wnt-MAPK pathway. Has a role in the mig-13 pathway to promote the guidance, migration and positioning of Q neuroblasts and their descendants along the anteroposterior body axis and the anterior migration of BDU interneurons. Also required for normal vulval formation. Plays a role in regulating gene expression in dopaminergic neurons, acting in midbody PDE neurons, and acting redundantly with ceh-40 in head neurons. May activate dopamine pathway genes in concert with ETS domain-containing protein ast-1, and homeobox proteins ceh-43 and ceh-40. The sequence is that of Homeobox protein ceh-20 from Caenorhabditis elegans.